The sequence spans 75 residues: Large ribosomal subunit protein bL31 (75 aa).

Part of the 50S ribosomal subunit.

In terms of biological role, binds the 23S rRNA. The polypeptide is Large ribosomal subunit protein bL31 (Rhodopseudomonas palustris (strain ATCC BAA-98 / CGA009)).